Consider the following 276-residue polypeptide: Protein HemX (276 aa).

8 consecutive transmembrane segments (helical) span residues 9–29, 40–60, 66–86, 93–113, 132–152, 187–207, 217–237, and 247–267; these read LNEG…IDFL, FWLL…FMWV, VLNV…LSLV, VDFI…IHTF, LVIH…SFVF, VLNV…VIWA, FDAK…YLYI, and VAAL…FLLG.

To M.leprae U1620K.

The protein resides in the cell membrane. In terms of biological role, required for HemL synthesis. The protein is Protein HemX (hemX) of Bacillus subtilis (strain 168).